Reading from the N-terminus, the 129-residue chain is Phosphoribosyl-AMP cyclohydrolase (129 aa).

A Mg(2+)-binding site is contributed by Asp86. Cys87 provides a ligand contact to Zn(2+). Mg(2+) is bound by residues Asp88 and Asp90. Zn(2+)-binding residues include Cys104 and Cys111.

The protein belongs to the PRA-CH family. As to quaternary structure, homodimer. Mg(2+) serves as cofactor. Requires Zn(2+) as cofactor.

Its subcellular location is the cytoplasm. It carries out the reaction 1-(5-phospho-beta-D-ribosyl)-5'-AMP + H2O = 1-(5-phospho-beta-D-ribosyl)-5-[(5-phospho-beta-D-ribosylamino)methylideneamino]imidazole-4-carboxamide. Its pathway is amino-acid biosynthesis; L-histidine biosynthesis; L-histidine from 5-phospho-alpha-D-ribose 1-diphosphate: step 3/9. In terms of biological role, catalyzes the hydrolysis of the adenine ring of phosphoribosyl-AMP. In Ignicoccus hospitalis (strain KIN4/I / DSM 18386 / JCM 14125), this protein is Phosphoribosyl-AMP cyclohydrolase.